The following is a 681-amino-acid chain: Macrolide export ATP-binding/permease protein MacB (681 aa).

The region spanning 6-244 (LKLAAVTRRF…FAEVGVGAAA (239 aa)) is the ABC transporter domain. 42–49 (GASGSGKS) contributes to the ATP binding site. Residues 246 to 273 (TETAADTRSAPASGDAPPPANNDTAADP) are compositionally biased toward low complexity. The interval 246-298 (TETAADTRSAPASGDAPPPANNDTAADPAPAPDASPPAPAVSPKHAGWRGSRS) is disordered. Residues 274 to 285 (APAPDASPPAPA) are compositionally biased toward pro residues. Transmembrane regions (helical) follow at residues 306 to 326 (CLTM…VAVG), 554 to 574 (LTLL…IGVM), 611 to 631 (LVCL…GALF), and 644 to 664 (AGAI…FGFM).

Belongs to the ABC transporter superfamily. Macrolide exporter (TC 3.A.1.122) family. In terms of assembly, homodimer.

It localises to the cell inner membrane. Non-canonical ABC transporter that contains transmembrane domains (TMD), which form a pore in the inner membrane, and an ATP-binding domain (NBD), which is responsible for energy generation. Confers resistance against macrolides. This chain is Macrolide export ATP-binding/permease protein MacB, found in Burkholderia orbicola (strain AU 1054).